The sequence spans 22 residues: Mu-conotoxin KIIIB (22 aa).

The propeptide occupies 1 to 2 (KR). 7 disulfide bridges follow: cysteine 5/cysteine 13, cysteine 5/cysteine 19, cysteine 5/cysteine 20, cysteine 6/cysteine 13, cysteine 6/cysteine 19, cysteine 8/cysteine 19, and cysteine 8/cysteine 20. Pharmacophore key residues stretches follow at residues 14 to 16 (RDH) and 18 to 19 (RC). Residue cysteine 20 is modified to Cysteine amide.

This sequence belongs to the conotoxin M superfamily. As to quaternary structure, monomer. Toxins with three different disulfide connectivities have been synthesized. The conotoxin mu-KIIIA-P1 shows the connectivity C1-C5, C2-C4, and C3-C6, whereas mu-KIIIA-P2 shows the connectivity C1-C6, C2-C4, and C3-C5. The conotoxin mu-KIIIA-N has the 'native' fold of the mu-conotoxin family (C1-C4, C2-C5, and C3-C6). Mu-KIIIA-P1 and mu-KIIIA-P2 are obtained by both thermodynamic oxidative folding and regioselective synthesis. Mu-KIIIA-P1 is the major oxidative folding product. Mu-KIIIA-N is only obtained by regioselective synthesis. Expressed by the venom duct.

It is found in the secreted. Mu-conotoxin KIIIA-P1: mu-conotoxins block voltage-gated sodium channels (Nav). This toxin potently blocks Nav1.2/SCN2A (IC(50)5-124 nM), Nav1.4/SCN4A (IC(50)=20-90 nM), and Nav1.7/SCN9A (IC(50)=290-413 nM). It moderately blocks Nav1.1/SCN1A, and mNav1.6/SCN8A. It also shows a very low activity on Nav1.3/SCN3A. This toxin binds a microsite within the pore different from the tetrodotoxin binding site 1 (tested on Nav1.2). The block is partial, with a residual current that can be completely blocked by TTX. The toxin probably docks at a more superficial site in the outer vestibule of the channel than does TTX. On rNav1.2/SCN2A, it produces a block that is only partially reversible. The block of Nav1.7 is modified when beta-subunits are coexpressed with the alpha subunit. Hence, blocks of channels containing beta-1 and beta-3 subunits are more potent (compared to channels without beta subunits), whereas blocks of channels containing beta-2 and beta-4 subunits are less potent (compared to channels without beta subunits). Its function is as follows. Mu-conotoxin KIIIA-P2: This toxin potently blocks Nav1.2/SCN2A (Kd=230 nM, IC(50)=1.37 uM) and Nav1.4/SCN4A (Kd=830 nM, IC(50)=2 uM). It also moderately blocks Nav1.7/SCN9A (Kd=1.57 uM, IC(50)=5.4 uM). In addition, this toxin may also inhibit other sodium channels, as does Mu-conotoxin KIIIA-P1. Functionally, mu-conotoxin KIIIA-N: This toxin moderately blocks Nav1.2/SCN2A (IC(50)=875 nM), Nav1.4/SCN4A (IC(50)=472 nM), and Nav1.7/SCN9A (IC(50)=887 nM). In terms of biological role, mu-conotoxin KIIIB-P1: This toxin potently blocks Nav1.2/SCN2A (Kd=470 nM). In addition, this toxin may also inhibit other sodium channels, as does Mu-conotoxin KIIIA-P1. Mu-conotoxin KIIIB-P2: This toxin potently blocks Nav1.2/SCN2A (Kd=26 nM). In addition, this toxin may also inhibit other sodium channels, as does Mu-conotoxin KIIIA-P1. This is Mu-conotoxin KIIIB from Conus kinoshitai (Kinoshita's cone).